A 959-amino-acid polypeptide reads, in one-letter code: MSTPTGLPALNGDVLSAINDMIGRVIIINTTDKKRYSGVLGAVSQDFDFGMQCVVEITKENENNLLRTESECRDKMVFHYSDIVDFAYVTQEIKKQHAVSKFVTDRQYHGDTPIEGEELQEWNGGEEDGLGGSIEDDVVVAGGQTAARRSNNHNNGTGWSVNDMFAANEKMNVVSTFKEDLTQYTTVEVVGTDEDRARAERLAREIESNSSSKFMANLENDDDERDLDKITRQEDFENGNGRKRNNNSFNQQQQQRRNPNIAPNGQPVNRRAEGLRGDRRNSGSSSANNSRYGAPAAAQQNYSQNQQQQQGQKGYRRQNEENDWQMAKGKGQNQGHDHSFRQQQKQMLDPRPNNNVKPADDKAQSATTATAAAGGSRVTDLKNWGNEFSIATAPKDQAPAVPAGNSGSAWNRGPPSSLVAKGSSNESTPPPTTNGEEAETKKEEAPSTSVDVAAAPVQNVQNDAEKHQEDDNVSVTSENDSVITSKSSSFKFNINAPEFKPRVAPATPTATTPVQNEYHPQQQPHPAMMAPQQGPPAPGMGMVPPHMGGPQNQGQPPMMMWQQTGQQQQGGGGYPQNHQFPIQHVPMQGVPGQMYGPGAATPVTVAQQPNQQHQVPTSAAGGQNHQLRDGEYREKQPLYMPYGPPQMVPVTSQQFYHSQYQGQMQQAAPYQMKMMPQQAPQGAYQQRYQQPQVYMMPPQGQQQQPRYQGPPPPQQQQQQQPQQQQFSGEQSRPQSHPNSQPTTPGPRGELPKMSGAPQNGNMQAESSSNASHSGSTSSQSGQRSGSPPGAVPPPPPPQQQHQQQQHPPHHAPPHVGAPPPQMMQQQQQHIQQYMVMQGPHQMHPQIPNYYQQPQQVFYPMIMPQQMPMQQNQHPQQSLMGERSDQGFPTSGYFDYRTMPNYQQQQQQQQQQMHRQNSLPQQFQGNQGVNPSGQQSGPPPPPPPSQQGTPRDQQHSQSPP.

Positions 13–92 (DVLSAINDMI…IVDFAYVTQE (80 aa)) constitute a Sm domain. 5 disordered regions span residues 203 to 378 (AREI…GSRV), 392 to 484 (TAPK…SVIT), 501 to 528 (PRVAPATPTATTPVQNEYHPQQQPHPAM), 697 to 831 (PPQG…QHIQ), and 867 to 959 (PMQQ…QSPP). Residues 226-235 (DLDKITRQED) show a composition bias toward basic and acidic residues. The span at 246 to 260 (NNSFNQQQQQRRNPN) shows a compositional bias: low complexity. Residues 270–281 (RRAEGLRGDRRN) show a composition bias toward basic and acidic residues. Over residues 282–313 (SGSSSANNSRYGAPAAAQQNYSQNQQQQQGQK) the composition is skewed to low complexity. Composition is skewed to polar residues over residues 341-356 (RQQQKQMLDPRPNNNV) and 473-484 (VSVTSENDSVIT). Composition is skewed to low complexity over residues 504 to 528 (APATPTATTPVQNEYHPQQQPHPAM), 697 to 707 (PPQGQQQQPRY), and 715 to 725 (QQQQQQPQQQQ). Polar residues-rich tracts occupy residues 726–742 (FSGEQSRPQSHPNSQPT) and 756–765 (APQNGNMQAE). A compositionally biased stretch (low complexity) spans 766–788 (SSSNASHSGSTSSQSGQRSGSPP). Residues 789-798 (GAVPPPPPPQ) show a composition bias toward pro residues. Composition is skewed to low complexity over residues 822–831 (MMQQQQQHIQ), 867–876 (PMQQNQHPQQ), and 902–911 (QQQQQQQQQQ). A compositionally biased stretch (polar residues) spans 912–922 (MHRQNSLPQQF). Positions 923–935 (QGNQGVNPSGQQS) are enriched in low complexity. A compositionally biased stretch (polar residues) spans 948–959 (TPRDQQHSQSPP).

Belongs to the ataxin-2 family. In terms of assembly, interacts (via C-terminus) with szy-20 (via C-terminus); the interaction is RNA independent. Interacts with pab-1. Interacts with gdi-1. As to expression, expressed in the central nervous system, dorsal and ventral nerve cord, intestinal lining and body-wall muscle. Expressed in the gonad.

It localises to the cytoplasm. It is found in the nucleus. Functionally, probable RNA-binding protein that negatively regulates the translation of targets. Functions with RNA-binding protein szy-20 to ensure embryonic cell division, and to this end, plays a role in the regulation of centrosome assembly, position and size, and in astral microtubule outgrowth and nucleation. Required for gonad development, germ cell proliferation and for the production of oocytes. Regulates whole body growth and fat accumulation in response to food availability, and this may be through the mTOR pathway, upstream of daf-15 and rheb-1. The chain is Ataxin-2 homolog from Caenorhabditis elegans.